A 357-amino-acid chain; its full sequence is Red-sensitive opsin-1 (357 aa).

At 1 to 49 (MAEHWGDAIYAARRKGDETTREAMFTYTNSNNTKDPFEGPNYHIAPRWV) the chain is on the extracellular side. N-linked (GlcNAc...) asparagine glycosylation is present at Asn31. A helical membrane pass occupies residues 50-74 (YNVATVWMFFVVVASTFTNGLVLVA). Residues 75 to 86 (TAKFKKLRHPLN) lie on the Cytoplasmic side of the membrane. Residues 87-112 (WILVNLAIADLGETLFASTISVINQF) form a helical membrane-spanning segment. The Extracellular segment spans residues 113–126 (FGYFILGHPMCIFE). The cysteines at positions 123 and 200 are disulfide-linked. The chain crosses the membrane as a helical span at residues 127-146 (GYTVSVCGIAALWSLTVISW). The Cytoplasmic segment spans residues 147–165 (ERWVVVCKPFGNVKFDAKW). Residues 166-189 (ASAGIIFSWVWAAAWCAPPIFGWS) traverse the membrane as a helical segment. Residues 190 to 215 (RYWPHGLKTSCGPDVFSGSEDPGVQS) lie on the Extracellular side of the membrane. A helical transmembrane segment spans residues 216–243 (YMVVLMITCCIIPLAIIILCYIAVYLAI). The Cytoplasmic portion of the chain corresponds to 244–265 (HAVAQQQKDSESTQKAEKEVSR). Residues 266 to 289 (MVVVMIFAYCFCWGPYTFFACFAA) form a helical membrane-spanning segment. At 290-297 (ANPGYAFH) the chain is on the extracellular side. A helical transmembrane segment spans residues 298–322 (PLAAAMPAYFAKSATIYNPVIYVFM). The residue at position 309 (Lys309) is an N6-(retinylidene)lysine. At 323 to 357 (NRQFRVCIMQLFGKKVDDGSEVSTSKTEVSSVAPA) the chain is on the cytoplasmic side.

Belongs to the G-protein coupled receptor 1 family. Opsin subfamily. Phosphorylated on some or all of the serine and threonine residues present in the C-terminal region. In terms of tissue distribution, retinal double cone principal photoreceptor cell outer segments.

It localises to the membrane. Visual pigments are the light-absorbing molecules that mediate vision. They consist of an apoprotein, opsin, covalently linked to cis-retinal. The polypeptide is Red-sensitive opsin-1 (opn1lw1) (Danio rerio (Zebrafish)).